The chain runs to 146 residues: Hut operon positive regulatory protein (146 aa).

Belongs to the HutP family. Homohexamer.

Functionally, antiterminator that binds to cis-acting regulatory sequences on the mRNA in the presence of histidine, thereby suppressing transcription termination and activating the hut operon for histidine utilization. This is Hut operon positive regulatory protein from Bacillus cytotoxicus (strain DSM 22905 / CIP 110041 / 391-98 / NVH 391-98).